We begin with the raw amino-acid sequence, 253 residues long: 3-deoxy-manno-octulosonate cytidylyltransferase (253 aa).

The protein belongs to the KdsB family.

The protein resides in the cytoplasm. The enzyme catalyses 3-deoxy-alpha-D-manno-oct-2-ulosonate + CTP = CMP-3-deoxy-beta-D-manno-octulosonate + diphosphate. The protein operates within nucleotide-sugar biosynthesis; CMP-3-deoxy-D-manno-octulosonate biosynthesis; CMP-3-deoxy-D-manno-octulosonate from 3-deoxy-D-manno-octulosonate and CTP: step 1/1. It functions in the pathway bacterial outer membrane biogenesis; lipopolysaccharide biosynthesis. Functionally, activates KDO (a required 8-carbon sugar) for incorporation into bacterial lipopolysaccharide in Gram-negative bacteria. This Neisseria meningitidis serogroup C (strain 053442) protein is 3-deoxy-manno-octulosonate cytidylyltransferase.